A 546-amino-acid chain; its full sequence is CTP synthase (546 aa).

An amidoligase domain region spans residues methionine 1–isoleucine 266. CTP is bound at residue serine 14. Residue serine 14 coordinates UTP. ATP is bound by residues serine 15–isoleucine 20 and aspartate 72. The Mg(2+) site is built by aspartate 72 and glutamate 140. CTP-binding positions include aspartate 147–glutamate 149, lysine 187–glutamine 192, and lysine 223. Residues lysine 187–glutamine 192 and lysine 223 contribute to the UTP site. Lysine 239–valine 241 contributes to the ATP binding site. The Glutamine amidotransferase type-1 domain occupies threonine 291–glycine 542. L-glutamine is bound at residue glycine 352. Catalysis depends on cysteine 379, which acts as the Nucleophile; for glutamine hydrolysis. Residues leucine 380–glutamine 383, glutamate 403, and arginine 470 contribute to the L-glutamine site. Active-site residues include histidine 515 and glutamate 517.

Belongs to the CTP synthase family. Homotetramer.

The enzyme catalyses UTP + L-glutamine + ATP + H2O = CTP + L-glutamate + ADP + phosphate + 2 H(+). The catalysed reaction is L-glutamine + H2O = L-glutamate + NH4(+). It carries out the reaction UTP + NH4(+) + ATP = CTP + ADP + phosphate + 2 H(+). Its pathway is pyrimidine metabolism; CTP biosynthesis via de novo pathway; CTP from UDP: step 2/2. With respect to regulation, allosterically activated by GTP, when glutamine is the substrate; GTP has no effect on the reaction when ammonia is the substrate. The allosteric effector GTP functions by stabilizing the protein conformation that binds the tetrahedral intermediate(s) formed during glutamine hydrolysis. Inhibited by the product CTP, via allosteric rather than competitive inhibition. Its function is as follows. Catalyzes the ATP-dependent amination of UTP to CTP with either L-glutamine or ammonia as the source of nitrogen. Regulates intracellular CTP levels through interactions with the four ribonucleotide triphosphates. This is CTP synthase from Aliivibrio salmonicida (strain LFI1238) (Vibrio salmonicida (strain LFI1238)).